The following is a 735-amino-acid chain: Nuclear intron maturase 2, mitochondrial (735 aa).

The transit peptide at 1 to 12 (MRRSFSVLGPYK) directs the protein to the mitochondrion. In terms of domain architecture, Reverse transcriptase spans 161 to 460 (RDKTDYESLS…KGIMFLDHVL (300 aa)). Residues 485-653 (GTLLSVTASL…KFLIEYLTLD (169 aa)) are intron maturase type-2. Residues 707 to 735 (SSTYNRDNDDQKNKEEDEDSEDGLRIARM) are disordered. Over residues 712 to 721 (RDNDDQKNKE) the composition is skewed to basic and acidic residues.

It belongs to the plant nuclear intron maturase (nMat) family. As to quaternary structure, associated to a large ribonucleoprotein complex in mitochondria containing group-II intron RNAs.

Its subcellular location is the mitochondrion. Its function is as follows. Nuclear-encoded maturase required for splicing of group-II introns in mitochondria. Involved in the splicing of mitochondrial COX2, NAD1 and NAD7 transcripts. Necessary for mitochondrial biogenesis during early developmental stages. The polypeptide is Nuclear intron maturase 2, mitochondrial (Arabidopsis thaliana (Mouse-ear cress)).